Reading from the N-terminus, the 161-residue chain is MQCPSCQHTDSRVLESRAADSGKSVRRRRECLNCEFRFTTYERVETMTITVVKRSGTRETFSRSKLLTGLVRACEKTGLETNRLELLVEEIELQLQQRNQKEITSQQLGDLVLEELGDLSEVAYVRFASVYGKFSGISDFITTLDALRQRNQVKRQLAKIS.

A zinc finger spans residues 3 to 34 (CPSCQHTDSRVLESRAADSGKSVRRRRECLNC). The ATP-cone domain occupies 49–139 (ITVVKRSGTR…VYGKFSGISD (91 aa)).

The protein belongs to the NrdR family. Zn(2+) serves as cofactor.

Negatively regulates transcription of bacterial ribonucleotide reductase nrd genes and operons by binding to NrdR-boxes. This Synechococcus sp. (strain RCC307) protein is Transcriptional repressor NrdR.